The following is a 357-amino-acid chain: Protein BUR2 (357 aa).

As to quaternary structure, belongs to the BUR kinase complex.

It is found in the nucleus. Component of the BUR kinase complex involved in transcription regulation. This complex phosphorylates the UBC2/RAD6 ubiquitin-conjugating enzyme (E2), leading to monoubiquitination of histone H2B and the silencing of telomeric-associated genes. Also required for histone H3 methylation. Necessary for the recovery from pheromone-induced growth arrest in the cell cycle G1 phase. The kinase activity of the complex requires the presence of BUR2. Overexpression of BUR2 interferes with mitotic chromosome segregation. This is Protein BUR2 (BUR2) from Candida glabrata (strain ATCC 2001 / BCRC 20586 / JCM 3761 / NBRC 0622 / NRRL Y-65 / CBS 138) (Yeast).